Here is a 165-residue protein sequence, read N- to C-terminus: Shikimate kinase (165 aa).

11 to 16 is a binding site for ATP; that stretch reads GAGKTT. Threonine 15 provides a ligand contact to Mg(2+). Substrate contacts are provided by aspartate 33, arginine 57, and glycine 78. Arginine 116 contributes to the ATP binding site. A substrate-binding site is contributed by arginine 134.

The protein belongs to the shikimate kinase family. Monomer. The cofactor is Mg(2+).

Its subcellular location is the cytoplasm. It carries out the reaction shikimate + ATP = 3-phosphoshikimate + ADP + H(+). It functions in the pathway metabolic intermediate biosynthesis; chorismate biosynthesis; chorismate from D-erythrose 4-phosphate and phosphoenolpyruvate: step 5/7. In terms of biological role, catalyzes the specific phosphorylation of the 3-hydroxyl group of shikimic acid using ATP as a cosubstrate. The chain is Shikimate kinase from Bacillus cereus (strain AH187).